The sequence spans 408 residues: Dual-specificity RNA methyltransferase RlmN (408 aa).

The active-site Proton acceptor is glutamate 126. Positions 132–373 (EEGRGTLCLS…NQAGYASPIR (242 aa)) constitute a Radical SAM core domain. A disulfide bridge connects residues cysteine 139 and cysteine 384. Cysteine 146, cysteine 150, and cysteine 153 together coordinate [4Fe-4S] cluster. S-adenosyl-L-methionine-binding positions include 210–211 (GE), serine 242, 264–266 (SLH), and asparagine 341. Cysteine 384 serves as the catalytic S-methylcysteine intermediate.

This sequence belongs to the radical SAM superfamily. RlmN family. Requires [4Fe-4S] cluster as cofactor.

Its subcellular location is the cytoplasm. It carries out the reaction adenosine(2503) in 23S rRNA + 2 reduced [2Fe-2S]-[ferredoxin] + 2 S-adenosyl-L-methionine = 2-methyladenosine(2503) in 23S rRNA + 5'-deoxyadenosine + L-methionine + 2 oxidized [2Fe-2S]-[ferredoxin] + S-adenosyl-L-homocysteine. The catalysed reaction is adenosine(37) in tRNA + 2 reduced [2Fe-2S]-[ferredoxin] + 2 S-adenosyl-L-methionine = 2-methyladenosine(37) in tRNA + 5'-deoxyadenosine + L-methionine + 2 oxidized [2Fe-2S]-[ferredoxin] + S-adenosyl-L-homocysteine. Specifically methylates position 2 of adenine 2503 in 23S rRNA and position 2 of adenine 37 in tRNAs. m2A2503 modification seems to play a crucial role in the proofreading step occurring at the peptidyl transferase center and thus would serve to optimize ribosomal fidelity. This Bartonella tribocorum (strain CIP 105476 / IBS 506) protein is Dual-specificity RNA methyltransferase RlmN.